A 611-amino-acid polypeptide reads, in one-letter code: MSRRKENEEVDKQTRIAIVSDDKCKPKRCRQECKKTCPVVRMGKLCIEVTPTSKIASLSEELCIGCGICVKKCPFEAITIINLPSNLEKHTTHRYSKNSFKLHRLPIPRPGEVLGLVGQNGIGKSTALKILAGKQKPNLGKYANPPDWTEILSYFRGSELQNYFTKILEDNLKALVKPQYVDQIPKAVRGAVGDLLDKKDERELQTKICEMLDLSHIRDREIAQLSGGELQRFAIAMVCIQNADIFMFDEPSSYLDVKQRLNAALTIRSLLHPTKFIIVVEHDLSVLDYLSDFICCLYGVPGCYGVVTMPFSVREGINIFLDGFVPTENMRFRTESLTFKVSESATEEEIKRMNHYVYPAMVKTLGKFELTVEKGHFSDSEILVLLGENGTGKTTFIRMLAGNLQPDGEVELPMLNISYKPQKISPKFQNHVRHLLHDKIRDAYVHPQFIADVMKPMKIEEIMDQEVQNLSGGELQRVALVLCLGKPADVYLIDEPSAYLDSEQRLVAAKVIKRYILHAKKTGFVVEHDFIMATYLADRVIVIEGQPSVKTTAFSPQSLLNGMNRFLELLGITFRRDPNNFRPRINKNNSVKDTEQKRSGQFFFLEDEACN.

4Fe-4S ferredoxin-type domains are found at residues 15–45 and 54–83; these read RIAIVSDDKCKPKRCRQECKKTCPVVRMGKL and KIASLSEELCIGCGICVKKCPFEAITIINL. 2 consecutive ABC transporter domains span residues 78–323 and 350–570; these read ITII…FLDG and IKRM…LELL. ATP-binding positions include 118-125 and 387-394; these read GQNGIGKS and GENGTGKT.

This sequence belongs to the ABC transporter superfamily. ABCE family. Interacts with components of eIF3 complex, namely eIF3a, eIF3j, eIF3b, eIF3c and eIF3i. Associates with the 40S ribosome subunit in an ATP-dependent manner and independently from the presence of the eIF3 complex. Forms a complex with Git and Pak; the interaction with Pak may be mediated by pix/dPIX. Ubiquitinated by Cnot4. Ubiquitination mediates the recruitment of autophagy receptors to the mitochondrial outer membrane and initiates mitophagy. As to expression, expressed in early and late larval imaginal disks (at protein level).

Its subcellular location is the cytoplasm. Functionally, plays a role in translation initiation and quality control of translation. Together with pelo and HBS1, is required for 48S complex formation from 80S ribosomes and dissociation of vacant 80S ribosomes. Stabilizes core components of eIF3 complex promoting their assembly into translation initiation-competent complexes. Together with pelo and HBS1, recognizes stalled ribosomes and promotes dissociation of elongation complexes assembled on non-stop mRNAs; this triggers endonucleolytic cleavage of the mRNA, a mechanism to release non-functional ribosomes and to degrade damaged mRNAs as part of the No-Go Decay (NGD) pathway. Plays a role in the regulation of mRNA turnover. Plays a role in quality control of translation of mitochondrial outer membrane-localized mRNA. As part of the Pink1-regulated signaling, ubiquitinated by Cnot4 upon mitochondria damage; this modification generates polyubiquitin signals that recruits autophagy receptors to the mitochondrial outer membrane to initiate mitophagy. Required in the wing disk for cell division and growth as well as cell survival. During muscle embryogenesis, required for the recruitment of Pak to muscle attachments in the embryo, hence may play a role in proper muscle morphogenesis and proper guidance and targeting of subsets of myotubes. This chain is Protein Pixie, found in Drosophila melanogaster (Fruit fly).